Consider the following 310-residue polypeptide: Ribonuclease Z (310 aa).

The Zn(2+) site is built by histidine 60, histidine 62, aspartate 64, histidine 65, histidine 140, aspartate 209, and histidine 269. Aspartate 64 serves as the catalytic Proton acceptor.

This sequence belongs to the RNase Z family. As to quaternary structure, homodimer. Requires Zn(2+) as cofactor.

It carries out the reaction Endonucleolytic cleavage of RNA, removing extra 3' nucleotides from tRNA precursor, generating 3' termini of tRNAs. A 3'-hydroxy group is left at the tRNA terminus and a 5'-phosphoryl group is left at the trailer molecule.. In terms of biological role, zinc phosphodiesterase, which displays some tRNA 3'-processing endonuclease activity. Probably involved in tRNA maturation, by removing a 3'-trailer from precursor tRNA. The sequence is that of Ribonuclease Z from Methanococcus maripaludis (strain C7 / ATCC BAA-1331).